A 153-amino-acid chain; its full sequence is Xanthine-guanine phosphoribosyltransferase (153 aa).

Residues R37–G38, R69, and D88–T96 contribute to the 5-phospho-alpha-D-ribose 1-diphosphate site. R69 contributes to the GMP binding site. Position 89 (D89) interacts with Mg(2+). Residues D92 and I135 each contribute to the guanine site. 2 residues coordinate xanthine: D92 and I135. GMP contacts are provided by residues D92–T96 and W134–I135.

Belongs to the purine/pyrimidine phosphoribosyltransferase family. XGPT subfamily. Homotetramer. The cofactor is Mg(2+).

The protein localises to the cell membrane. The catalysed reaction is GMP + diphosphate = guanine + 5-phospho-alpha-D-ribose 1-diphosphate. It catalyses the reaction XMP + diphosphate = xanthine + 5-phospho-alpha-D-ribose 1-diphosphate. It carries out the reaction IMP + diphosphate = hypoxanthine + 5-phospho-alpha-D-ribose 1-diphosphate. The protein operates within purine metabolism; GMP biosynthesis via salvage pathway; GMP from guanine: step 1/1. It functions in the pathway purine metabolism; XMP biosynthesis via salvage pathway; XMP from xanthine: step 1/1. Purine salvage pathway enzyme that catalyzes the transfer of the ribosyl-5-phosphate group from 5-phospho-alpha-D-ribose 1-diphosphate (PRPP) to the N9 position of the 6-oxopurines guanine and xanthine to form the corresponding ribonucleotides GMP (guanosine 5'-monophosphate) and XMP (xanthosine 5'-monophosphate), with the release of PPi. To a lesser extent, also acts on hypoxanthine. This Buchnera aphidicola subsp. Baizongia pistaciae (strain Bp) protein is Xanthine-guanine phosphoribosyltransferase.